We begin with the raw amino-acid sequence, 361 residues long: MAGNSIGQFFRVTTFGESHGSALGGIVDGVPPGIPLCEEDLQHDLDRRRPGTSRYTTQRREPDRVKILSGVFEGVTTGTSIGLLIDNTDQRSQDYSAIKDFYRPGHADYTYAQKYGRRDYRGGGRSSARETAMRVAAGAIAKKYLAQQCGVRVRGYLAQMGDIHCELKDWTQVEKNSFFCPDVDCLEALDALIHDLKKAGDSIGAGVTVVAENLPAGLGEPVFDRLDADLAHALMSINAVKGVEIGDGFAVIGKRGSENRDEITLEGFQSNHAGGILGGISSGQPVIAHLALKPTSSIMVPGRTVNRSGDAVEMVTRGRHDPCVGIRAVPIAEAMMAIVLMDHFLRQRAQCADVVAAAPIR.

Arg48 and Arg54 together coordinate NADP(+). FMN is bound by residues 125-127 (RSS), 238-239 (NA), Gly278, 293-297 (KPTSS), and Arg319.

Belongs to the chorismate synthase family. Homotetramer. Requires FMNH2 as cofactor.

It catalyses the reaction 5-O-(1-carboxyvinyl)-3-phosphoshikimate = chorismate + phosphate. The protein operates within metabolic intermediate biosynthesis; chorismate biosynthesis; chorismate from D-erythrose 4-phosphate and phosphoenolpyruvate: step 7/7. Catalyzes the anti-1,4-elimination of the C-3 phosphate and the C-6 proR hydrogen from 5-enolpyruvylshikimate-3-phosphate (EPSP) to yield chorismate, which is the branch point compound that serves as the starting substrate for the three terminal pathways of aromatic amino acid biosynthesis. This reaction introduces a second double bond into the aromatic ring system. The protein is Chorismate synthase of Sodalis glossinidius (strain morsitans).